We begin with the raw amino-acid sequence, 670 residues long: Receptor for retinol uptake STRA6 (670 aa).

Over 1-50 the chain is Extracellular; the sequence is MESQASENGSQTSSGVTDDYSSWYIEEPLGAEEVQPEGVIPLCQLTAPPA. N-linked (GlcNAc...) asparagine glycosylation occurs at Asn8. The helical transmembrane segment at 51–71 threads the bilayer; it reads LLHACLASLSFLVLLLLALLV. Over 72–97 the chain is Cytoplasmic; it reads RRRRLWPRCGHRGLGLPSPVDFLAGD. A helical membrane pass occupies residues 98 to 118; that stretch reads LSWTVPAAVFVVLFSNLCLLL. At 119–144 the chain is on the extracellular side; it reads PDENPLPFLNLTAASSPDGEMETSRG. Asn128 is a glycosylation site (N-linked (GlcNAc...) asparagine). The chain crosses the membrane as a helical span at residues 145–165; it reads PWKLLALLYYPALYYPLAACA. The Cytoplasmic portion of the chain corresponds to 166 to 168; sequence SAG. Residues 169–189 form a helical membrane-spanning segment; the sequence is HQAAFLLGTVLSWAHFGVQVW. The Extracellular segment spans residues 190–205; that stretch reads QKAECPQDPKIYKHYS. A helical membrane pass occupies residues 206–226; the sequence is LLASLPLLLGLGFLSLWYPVQ. Residues 227–296 lie on the Cytoplasmic side of the membrane; it reads LVQSLRHRTG…PQPGFRLPLK (70 aa). The interval 235-294 is interaction with RBP1; that stretch reads TGAGSQGLQTSYSEKYLRTLLCPKKLDSCSHPASKRSLLSRAWAFSHHSIYTPQPGFRLP. Residues 297–317 form a helical membrane-spanning segment; the sequence is LVISATLTGTATYQVALLLLV. The Extracellular portion of the chain corresponds to 318-368; that stretch reads SVVPTVQKVRAGINTDVSYLLAGFGIVLSEDRQEVVELVKHHLWTVEACYI. A helical transmembrane segment spans residues 369–389; that stretch reads SALVLSCASTFLLLIRSLRTH. At 390 to 423 the chain is on the cytoplasmic side; the sequence is RANLQALHRGAALDLDPPLQSIHPSRQAIVSWMS. Residues 424–444 form a helical membrane-spanning segment; sequence FCAYQTAFSCLGLLVQQVIFF. Topologically, residues 445-474 are extracellular; the sequence is LGTTSLAFLVFVPLLHGRNLLLLRSLESTW. The helical transmembrane segment at 475–495 threads the bilayer; that stretch reads PFWLTVALAVILQNIAANWIF. Residues 496–510 are Cytoplasmic-facing; sequence LRTHHGYPELTNRRM. An intramembrane region (helical) is located at residues 511 to 548; it reads LCVATFLLFPINMLVGAIMAVWRVLISSLYNTVHLGQM. Over 549–670 the chain is Cytoplasmic; the sequence is DLSLLPQRAA…TSAKANGTQP (122 aa). Tyr644 carries the post-translational modification Phosphotyrosine.

As to quaternary structure, homodimer. Interacts with JAK2 and STAT5. Interacts (via extracellular domains) with RBP4. Interacts (via cytoplasmic domains) with RBP1. In terms of processing, phosphorylated on tyrosine residues in response to RBP4 binding. Phosphorylation requires the presence of LRAT, suggesting it may be triggered by the uptake of retinol that is then metabolized within the cell to retinoids that function as signaling molecules. As to expression, widely expressed in the embryo. Detected in adult in the retinal pigment epithelium in the eye. In the adult, is highly expressed in cells that compose blood-organ barriers in the brain (choroid plexus and the brain microvascular), in testis (the basal layer of the seminiferous epithelium), in the yolk sac, and in the chorioallantoic placenta. Detected in white adipose tissue and skeletal muscle, but not in liver (at protein level). Widely expressed in adult, with high expression levels in the eye. Detected in brain, cerebellum, testis, pituitary, pancreas, kidney, spleen, and female genital tract; and at very low levels in heart and lung. Not detected in liver.

Its subcellular location is the cell membrane. Functions as a retinol transporter. Accepts all-trans retinol from the extracellular retinol-binding protein RBP4, facilitates retinol transport across the cell membrane, and then transfers retinol to the cytoplasmic retinol-binding protein RBP1. Retinol uptake is enhanced by LRAT, an enzyme that converts retinol to all-trans retinyl esters, the storage forms of vitamin A. Contributes to the activation of a signaling cascade that depends on retinol transport and LRAT-dependent generation of retinol metabolites that then trigger activation of JAK2 and its target STAT5, and ultimately increase the expression of SOCS3 and inhibit cellular responses to insulin. Important for the homeostasis of vitamin A and its derivatives, such as retinoic acid and 11-cis-retinal. STRA6-mediated transport is particularly important in the eye, and under conditions of dietary vitamin A deficiency. Does not transport retinoic acid. This chain is Receptor for retinol uptake STRA6 (Stra6), found in Mus musculus (Mouse).